A 238-amino-acid chain; its full sequence is Cell division protein A (238 aa).

As to quaternary structure, interacts with CdvB.

It localises to the cytoplasm. The protein resides in the nucleoid. The protein localises to the cell membrane. Part of a cell division machinery. The CdvA, CdvB and CdvC proteins polymerize between segregating nucleoids and persist throughout cell division, forming a successively smaller structure during constriction. CdvA is a membrane interacting protein that recruits ESCRT-III homologs to the membrane. This chain is Cell division protein A, found in Sulfolobus acidocaldarius (strain ATCC 33909 / DSM 639 / JCM 8929 / NBRC 15157 / NCIMB 11770).